A 230-amino-acid chain; its full sequence is Large ribosomal subunit protein uL1 (230 aa).

Belongs to the universal ribosomal protein uL1 family. In terms of assembly, part of the 50S ribosomal subunit.

Binds directly to 23S rRNA. The L1 stalk is quite mobile in the ribosome, and is involved in E site tRNA release. In terms of biological role, protein L1 is also a translational repressor protein, it controls the translation of the L11 operon by binding to its mRNA. This chain is Large ribosomal subunit protein uL1, found in Bradyrhizobium sp. (strain BTAi1 / ATCC BAA-1182).